We begin with the raw amino-acid sequence, 400 residues long: S-adenosylmethionine synthase (400 aa).

An ATP-binding site is contributed by 136 to 141 (GTGSTD).

It belongs to the AdoMet synthase 2 family. Requires Mg(2+) as cofactor.

It carries out the reaction L-methionine + ATP + H2O = S-adenosyl-L-methionine + phosphate + diphosphate. The protein operates within amino-acid biosynthesis; S-adenosyl-L-methionine biosynthesis; S-adenosyl-L-methionine from L-methionine: step 1/1. In terms of biological role, catalyzes the formation of S-adenosylmethionine from methionine and ATP. The sequence is that of S-adenosylmethionine synthase from Methanoregula boonei (strain DSM 21154 / JCM 14090 / 6A8).